The primary structure comprises 248 residues: Membrane-spanning 4-domains subfamily A member 6A (248 aa).

Residues 1 to 46 lie on the Cytoplasmic side of the membrane; sequence MTSQPVPNETIIVLPSNVINFSQAEKPEPTNQGQDSLKKHLHAEIK. A helical membrane pass occupies residues 47-67; it reads VIGTIQILCGMMVLSLGIILA. Residues 68–84 are Extracellular-facing; that stretch reads SASFSPNFTQVTSTLLN. The helical transmembrane segment at 85 to 105 threads the bilayer; it reads SAYPFIGPFFFIISGSLSIAT. At 106–116 the chain is on the cytoplasmic side; sequence EKRLTKLLVHS. Residues 117-137 traverse the membrane as a helical segment; it reads SLVGSILSALSALVGFIILSV. Over 138–185 the chain is Extracellular; it reads KQATLNPASLQCELDKNNIPTRSYVSYFYHDSLYTTDCYTAKASLAGT. Residues 186-206 form a helical membrane-spanning segment; the sequence is LSLMLICTLLEFCLAVLTAVL. The Cytoplasmic segment spans residues 207–248; the sequence is RWKQAYSDFPGSVLFLPHSYIGNSGMSSKMTHDCGYEELLTS.

The protein belongs to the MS4A family. Variable expression in some B-cell, myelomonocytic, and erythroleukemia cell lines.

Its subcellular location is the membrane. Its function is as follows. May be involved in signal transduction as a component of a multimeric receptor complex. This chain is Membrane-spanning 4-domains subfamily A member 6A (MS4A6A), found in Homo sapiens (Human).